The primary structure comprises 202 residues: Imidazoleglycerol-phosphate dehydratase (202 aa).

The protein belongs to the imidazoleglycerol-phosphate dehydratase family.

Its subcellular location is the cytoplasm. It carries out the reaction D-erythro-1-(imidazol-4-yl)glycerol 3-phosphate = 3-(imidazol-4-yl)-2-oxopropyl phosphate + H2O. It functions in the pathway amino-acid biosynthesis; L-histidine biosynthesis; L-histidine from 5-phospho-alpha-D-ribose 1-diphosphate: step 6/9. The chain is Imidazoleglycerol-phosphate dehydratase from Synechococcus sp. (strain WH7803).